The following is a 650-amino-acid chain: Zinc finger CCCH domain-containing protein 55 (650 aa).

The tract at residues 67–162 (NSPSSTPTSP…THSGSADAAG (96 aa)) is disordered. A compositionally biased stretch (low complexity) spans 105–128 (SPSSPSSTSPWSFNNCINGNNGNN). Over residues 141-154 (PFSSHQSNGLSATH) the composition is skewed to polar residues. The segment at 232-254 (PCVYFSRGLCKNGESCKFIHGGY) adopts a C3H1-type zinc-finger fold. The RRM domain maps to 357-433 (RQIYLTFPAD…RVLVKPYKEK (77 aa)). The interval 566-650 (PVVNPMSVNN…PPVTTNNLMQ (85 aa)) is disordered. Residues 581 to 590 (AKEETNKSEL) are compositionally biased toward basic and acidic residues.

This chain is Zinc finger CCCH domain-containing protein 55, found in Arabidopsis thaliana (Mouse-ear cress).